Reading from the N-terminus, the 474-residue chain is Salutaridinol 7-O-acetyltransferase (474 aa).

His163 functions as the Proton acceptor in the catalytic mechanism. A disordered region spans residues 213 to 234 (ERLTSPSGMSEIPFSSTPEDTE). The span at 214–230 (RLTSPSGMSEIPFSSTP) shows a compositional bias: polar residues. The active-site Proton acceptor is Asp416.

The protein belongs to the plant acyltransferase family. As to expression, expressed in root, stem, leaf and capsule of the mature plant. Restricted to sieve elements of the phloem adjacent or proximal to laticifers.

It carries out the reaction (7S)-salutaridinol + acetyl-CoA = (7S)-O-acetylsalutaridinol + CoA. It functions in the pathway alkaloid biosynthesis; morphine biosynthesis. In terms of biological role, acetyltransferase involved in biosynthesis of morphinan-type benzylisoquinoline and opiate alkaloids natural products. Catalyzes the conversion of the phenanthrene alkaloid salutaridinol to salutaridinol-7-O-acetate, the immediate precursor of thebaine along the morphine biosynthetic pathway. Conversion of 7-O-acetylsalutaridinol into thebaine is spontaneous. This Papaver somniferum (Opium poppy) protein is Salutaridinol 7-O-acetyltransferase.